The chain runs to 160 residues: Probable small nuclear ribonucleoprotein-associated protein B (160 aa).

In terms of domain architecture, Sm spans 4–86 (SKNNKMMAHL…IVSMTVDGPP (83 aa)). The disordered stretch occupies residues 80–160 (MTVDGPPPRD…YGGPPGGRPF (81 aa)). Composition is skewed to gly residues over residues 99–113 (GGAGGVGQAKPGGRG), 128–143 (APGGLSGAMRGHGGPG), and 150–160 (GYGGPPGGRPF).

This sequence belongs to the snRNP SmB/SmN family.

Its subcellular location is the nucleus. It is found in the cytoplasm. The protein localises to the cytosol. Functionally, plays a role in pre-mRNA splicing as a core component of the spliceosomal U1, U2, U4 and U5 small nuclear ribonucleoproteins (snRNPs), the building blocks of the spliceosome. The polypeptide is Probable small nuclear ribonucleoprotein-associated protein B (snr-2) (Caenorhabditis elegans).